Consider the following 315-residue polypeptide: PIH1 domain-containing protein 2 (315 aa).

The protein belongs to the PIH1 family.

The protein is PIH1 domain-containing protein 2 (PIH1D2) of Bos taurus (Bovine).